The primary structure comprises 171 residues: tRNA-splicing endonuclease (171 aa).

Catalysis depends on residues Tyr110, His117, and Lys148.

The protein belongs to the tRNA-intron endonuclease family. Archaeal short subfamily. In terms of assembly, homotetramer; although the tetramer contains four active sites, only two participate in the cleavage. Therefore, it should be considered as a dimer of dimers.

The enzyme catalyses pretRNA = a 3'-half-tRNA molecule with a 5'-OH end + a 5'-half-tRNA molecule with a 2',3'-cyclic phosphate end + an intron with a 2',3'-cyclic phosphate and a 5'-hydroxyl terminus.. Endonuclease that removes tRNA introns. Cleaves pre-tRNA at the 5'- and 3'-splice sites to release the intron. The products are an intron and two tRNA half-molecules bearing 2',3' cyclic phosphate and 5'-OH termini. Recognizes a pseudosymmetric substrate in which 2 bulged loops of 3 bases are separated by a stem of 4 bp. The protein is tRNA-splicing endonuclease of Thermococcus onnurineus (strain NA1).